The primary structure comprises 279 residues: Phycobilisome rod-core linker polypeptide CpcG1 (279 aa).

One can recognise a PBS-linker domain in the interval 11-189 (SSQNQRVEGY…YWRDRQTLNA (179 aa)).

The protein belongs to the phycobilisome linker protein family. Part of the phycobilisome, a hemidiscoidal structure that is composed of two distinct substructures: a core complex and a number of rods radiating from the core.

It is found in the cellular thylakoid membrane. Its function is as follows. Rod-core linker protein required for attachment of phycocyanin to allophycocyanin in cores of phycobilisomes. In terms of biological role, linker polypeptides determine the state of aggregation and the location of the disk-shaped phycobiliprotein units within the phycobilisome and modulate their spectroscopic properties in order to mediate a directed and optimal energy transfer. The sequence is that of Phycobilisome rod-core linker polypeptide CpcG1 from Nostoc sp. (strain PCC 7120 / SAG 25.82 / UTEX 2576).